The chain runs to 359 residues: 4-hydroxy-3-methylbut-2-en-1-yl diphosphate synthase (flavodoxin) (359 aa).

The [4Fe-4S] cluster site is built by C265, C268, C300, and E307.

The protein belongs to the IspG family. [4Fe-4S] cluster serves as cofactor.

It carries out the reaction (2E)-4-hydroxy-3-methylbut-2-enyl diphosphate + oxidized [flavodoxin] + H2O + 2 H(+) = 2-C-methyl-D-erythritol 2,4-cyclic diphosphate + reduced [flavodoxin]. Its pathway is isoprenoid biosynthesis; isopentenyl diphosphate biosynthesis via DXP pathway; isopentenyl diphosphate from 1-deoxy-D-xylulose 5-phosphate: step 5/6. Converts 2C-methyl-D-erythritol 2,4-cyclodiphosphate (ME-2,4cPP) into 1-hydroxy-2-methyl-2-(E)-butenyl 4-diphosphate. The polypeptide is 4-hydroxy-3-methylbut-2-en-1-yl diphosphate synthase (flavodoxin) (Lawsonia intracellularis (strain PHE/MN1-00)).